We begin with the raw amino-acid sequence, 59 residues long: Large ribosomal subunit protein uL30 (59 aa).

This sequence belongs to the universal ribosomal protein uL30 family. In terms of assembly, part of the 50S ribosomal subunit.

The protein is Large ribosomal subunit protein uL30 of Psychrobacter sp. (strain PRwf-1).